The sequence spans 385 residues: U6 small nuclear RNA (adenine-(43)-N(6))-methyltransferase (385 aa).

S-adenosyl-L-methionine contacts are provided by Arg54, Gly83, Glu106, and Asn155.

It belongs to the methyltransferase superfamily. METTL16/RlmF family.

The protein resides in the cytoplasm. The protein localises to the nucleus. It catalyses the reaction adenosine in U6 snRNA + S-adenosyl-L-methionine = N(6)-methyladenosine in U6 snRNA + S-adenosyl-L-homocysteine + H(+). In terms of biological role, RNA N6-methyltransferase that mediates N6-methylation of adenine of U6 small nuclear RNA (U6 snRNA). The chain is U6 small nuclear RNA (adenine-(43)-N(6))-methyltransferase from Schizosaccharomyces pombe (strain 972 / ATCC 24843) (Fission yeast).